Reading from the N-terminus, the 659-residue chain is Biosynthetic arginine decarboxylase (659 aa).

Lys-128 is subject to N6-(pyridoxal phosphate)lysine. 308 to 318 is a binding site for substrate; it reads FDVGGGLGVDY.

This sequence belongs to the Orn/Lys/Arg decarboxylase class-II family. SpeA subfamily. Mg(2+) serves as cofactor. It depends on pyridoxal 5'-phosphate as a cofactor.

The catalysed reaction is L-arginine + H(+) = agmatine + CO2. It functions in the pathway amine and polyamine biosynthesis; agmatine biosynthesis; agmatine from L-arginine: step 1/1. In terms of biological role, catalyzes the biosynthesis of agmatine from arginine. The protein is Biosynthetic arginine decarboxylase of Yersinia pestis.